Here is a 420-residue protein sequence, read N- to C-terminus: Gamma-glutamyl phosphate reductase (420 aa).

It belongs to the gamma-glutamyl phosphate reductase family.

The protein localises to the cytoplasm. The enzyme catalyses L-glutamate 5-semialdehyde + phosphate + NADP(+) = L-glutamyl 5-phosphate + NADPH + H(+). It participates in amino-acid biosynthesis; L-proline biosynthesis; L-glutamate 5-semialdehyde from L-glutamate: step 2/2. Functionally, catalyzes the NADPH-dependent reduction of L-glutamate 5-phosphate into L-glutamate 5-semialdehyde and phosphate. The product spontaneously undergoes cyclization to form 1-pyrroline-5-carboxylate. This is Gamma-glutamyl phosphate reductase from Streptococcus pneumoniae (strain ATCC 700669 / Spain 23F-1).